The following is a 469-amino-acid chain: Zinc transporter SLC39A7 (469 aa).

Residues 10 to 30 form a helical membrane-spanning segment; sequence WVAVGLLTWATLGLLVAGLGG. Composition is skewed to basic and acidic residues over residues 42–56 and 66–114; these read FHGH…DFHH and HTHE…EHSH. Positions 42 to 121 are disordered; the sequence is FHGHSHRHSH…HSHGGYGESG (80 aa). H66 carries the pros-methylhistidine modification. 3 consecutive transmembrane segments (helical) span residues 138 to 158, 169 to 189, and 214 to 234; these read ALGA…LIPV, LQIL…LHLI, and GPIL…LVVE. Residues 242–263 are compositionally biased toward basic residues; that stretch reads GGHGHSHGHGHAHSHTRGSHGH. The interval 242–310 is disordered; sequence GGHGHSHGHG…VRPQNAEEEK (69 aa). The span at 264-285 shows a compositional bias: basic and acidic residues; that stretch reads GRQERSTKEKQSSEEEEKETRG. Phosphoserine; by CK2 is present on residues S275 and S276. Helical transmembrane passes span 381 to 401 and 417 to 436; these read MRLQ…ALLT and GWVL…VSVL.

This sequence belongs to the ZIP transporter (TC 2.A.5) family. KE4/Catsup subfamily. As to quaternary structure, homodimer. Rapidly phosphorylated by CK2 following Zn(2+) treatment. This phosphorylation is required for efficient cytosolic Zn(2+) release. Post-translationally, methylation at some His residue by METTL9 leads to reduced zinc-binding. In terms of tissue distribution, widely expressed.

Its subcellular location is the endoplasmic reticulum membrane. The protein resides in the golgi apparatus. It localises to the cis-Golgi network membrane. It catalyses the reaction Zn(2+)(in) = Zn(2+)(out). Phosphorylation activates zinc transport activity. Functionally, transports Zn(2+) from the endoplasmic reticulum (ER)/Golgi apparatus to the cytosol, playing an essential role in the regulation of cytosolic zinc levels. Acts as a gatekeeper of zinc release from intracellular stores, requiring post-translational activation by phosphorylation, resulting in activation of multiple downstream pathways leading to cell growth and proliferation. Has an essential role in B cell development and is required for proper B cell receptor signaling. Plays an important role in maintaining intestinal epithelial homeostasis and skin dermis development by regulating ER function. Controls cell signaling pathways involved in glucose metabolism in skeletal muscle. Has a protective role against ER stress in different biological contexts. Mediates Zn(2+)-induced ferroptosis. The sequence is that of Zinc transporter SLC39A7 (SLC39A7) from Homo sapiens (Human).